Reading from the N-terminus, the 110-residue chain is Small nuclear ribonucleoprotein Sm D2 (110 aa).

A Sm domain is found at 31-110 (MSLINDAMVT…VIVVLKTPVE (80 aa)).

Belongs to the snRNP core protein family. In terms of assembly, component of the Sm core complex, present in spliceosomal snRNP U1, U2, U4/U6 and U5. The core complex contains SMB1, SMD1, SMD2, SMD3, SME1, SMX3 and SMX2 (Sm proteins B, D1, D2, D3, E, F and G, respectively), and is probably a heptameric ring structure. Belongs to the CWC complex (or CEF1-associated complex), a spliceosome sub-complex reminiscent of a late-stage spliceosome composed of the U2, U5 and U6 snRNAs and at least BUD13, BUD31, BRR2, CDC40, CEF1, CLF1, CUS1, CWC2, CWC15, CWC21, CWC22, CWC23, CWC24, CWC25, CWC27, ECM2, HSH155, IST3, ISY1, LEA1, MSL1, NTC20, PRP8, PRP9, PRP11, PRP19, PRP21, PRP22, PRP45, PRP46, SLU7, SMB1, SMD1, SMD2, SMD3, SMX2, SMX3, SNT309, SNU114, SPP2, SYF1, SYF2, RSE1 and YJU2. Component of the U4/U6-U5 tri-snRNP complex composed of the U4, U6 and U5 snRNAs and at least PRP3, PRP4, PRP6, PRP8, PRP18, PRP31, PRP38, SNU13, SNU23, SNU66, SNU114, SPP381, SMB1, SMD1, SMD2, SMD3, SMX2, SMX3, LSM2, LSM3, LSM4, LSM5, LSM6, LSM7, LSM8, BRR2 and DIB1.

It is found in the nucleus. The protein resides in the cytoplasm. Its subcellular location is the cytosol. In terms of biological role, plays a role in pre-mRNA splicing as a core component of the spliceosomal U1, U2, U4 and U5 small nuclear ribonucleoproteins (snRNPs), the building blocks of the spliceosome. The chain is Small nuclear ribonucleoprotein Sm D2 (SMD2) from Saccharomyces cerevisiae (strain ATCC 204508 / S288c) (Baker's yeast).